The primary structure comprises 134 residues: Mediator of RNA polymerase II transcription subunit 10 (134 aa).

It belongs to the Mediator complex subunit 10 family. As to quaternary structure, component of the Mediator complex.

It is found in the nucleus. Component of the Mediator complex, a coactivator involved in the regulated transcription of nearly all RNA polymerase II-dependent genes. Mediator functions as a bridge to convey information from gene-specific regulatory proteins to the basal RNA polymerase II transcription machinery. Mediator is recruited to promoters by direct interactions with regulatory proteins and serves as a scaffold for the assembly of a functional preinitiation complex with RNA polymerase II and the general transcription factors. Negatively regulates the Wnt signaling pathway and positively regulates the Nodal signaling pathway. Required for cardiac cushion formation. This Danio rerio (Zebrafish) protein is Mediator of RNA polymerase II transcription subunit 10 (med10).